The chain runs to 460 residues: Transcription factor TGA10 (460 aa).

Residues 1–11 (MQGHHQNHHQH) are compositionally biased toward basic residues. Disordered stretches follow at residues 1–29 (MQGH…NKDG) and 43–163 (LDGQ…PKTL). Over residues 12-21 (LSSSSATSSH) the composition is skewed to low complexity. 2 stretches are compositionally biased toward polar residues: residues 65-81 (TQNL…NIFP) and 121-136 (DLTN…QGSK). The span at 138-162 (IKKEGNRKGLASSDHDIPKSSDPKT) shows a compositional bias: basic and acidic residues. A bZIP domain is found at 159-203 (DPKTLRRLAQNREAARKSRLRKKAYVQQLESCRIKLTQLEQEIQR). Positions 161-181 (KTLRRLAQNREAARKSRLRKK) are basic motif. The short motif at 163–170 (LRRLAQNR) is the Nuclear localization signal element. The tract at residues 187 to 201 (LESCRIKLTQLEQEI) is leucine-zipper. The region spanning 236-455 (AAVFDMEYAR…QALSSLWLAR (220 aa)) is the DOG1 domain.

Belongs to the bZIP family. Homodimer. Binds DNA as a dimer. Interacts with floral glutaredoxins GRXC7/ROXY1 and GRXC8/ROXY2 in the nucleus. Interacts with TGA1, TGA2, TGA3, TGA4, TGA5, TGA6, TGA7, TGA9 and PAN. As to expression, expressed at low levels in inflorescence apex and flowers.

It localises to the nucleus. Its function is as follows. Together with TGA9, basic leucine-zipper transcription factor required for anther development, probably via the activation of SPL expression in anthers and via the regulation of genes with functions in early and middle tapetal development. Required for signaling responses to pathogen-associated molecular patterns (PAMPs) such as flg22 that involves chloroplastic reactive oxygen species (ROS) production and subsequent expression of H(2)O(2)-responsive genes. The protein is Transcription factor TGA10 of Arabidopsis thaliana (Mouse-ear cress).